Reading from the N-terminus, the 207-residue chain is Thymidylate kinase (207 aa).

7 to 14 (GCEGTGKT) lines the ATP pocket.

Belongs to the thymidylate kinase family.

The enzyme catalyses dTMP + ATP = dTDP + ADP. Functionally, phosphorylation of dTMP to form dTDP in both de novo and salvage pathways of dTTP synthesis. The protein is Thymidylate kinase of Aster yellows witches'-broom phytoplasma (strain AYWB).